Here is a 433-residue protein sequence, read N- to C-terminus: Histidinol dehydrogenase 2 (433 aa).

3 residues coordinate NAD(+): Tyr-130, Gln-192, and Asn-215. Positions 238, 260, and 263 each coordinate substrate. The Zn(2+) site is built by Gln-260 and His-263. Catalysis depends on proton acceptor residues Glu-328 and His-329. Residues His-329, Asp-362, Glu-416, and His-421 each contribute to the substrate site. Residue Asp-362 participates in Zn(2+) binding. Residue His-421 coordinates Zn(2+).

Belongs to the histidinol dehydrogenase family. Zn(2+) is required as a cofactor.

The enzyme catalyses L-histidinol + 2 NAD(+) + H2O = L-histidine + 2 NADH + 3 H(+). Its pathway is amino-acid biosynthesis; L-histidine biosynthesis; L-histidine from 5-phospho-alpha-D-ribose 1-diphosphate: step 9/9. In terms of biological role, catalyzes the sequential NAD-dependent oxidations of L-histidinol to L-histidinaldehyde and then to L-histidine. The polypeptide is Histidinol dehydrogenase 2 (Trichormus variabilis (strain ATCC 29413 / PCC 7937) (Anabaena variabilis)).